Consider the following 706-residue polypeptide: Gamma-adducin (706 aa).

The segment covering 1 to 11 (MSSDTSPAVVT) has biased composition (low complexity). A disordered region spans residues 1–23 (MSSDTSPAVVTTPPPPSMPHKER). An N-acetylserine modification is found at Ser-2. 8 positions are modified to phosphoserine: Ser-31, Ser-42, Ser-64, Ser-402, Ser-414, Ser-423, Ser-442, and Ser-461. Disordered stretches follow at residues 471 to 495 (AEDS…VPLN), 534 to 556 (PPST…PFSH), 574 to 610 (QGLD…RLEE), and 651 to 706 (TSTT…KVEA). Residue Lys-484 forms a Glycyl lysine isopeptide (Lys-Gly) (interchain with G-Cter in SUMO2) linkage. Phosphoserine occurs at positions 583, 585, and 590. 2 stretches are compositionally biased toward low complexity: residues 590–605 (SVSQ…QSVP) and 651–662 (TSTTIENIEITI). A phosphoserine mark is found at Ser-673, Ser-677, Ser-679, Ser-681, and Ser-683. Residues 682-706 (PSKKKKKFRTPSFLKKNKKKEKVEA) are compositionally biased toward basic residues. The tract at residues 684–701 (KKKKKFRTPSFLKKNKKK) is interaction with calmodulin.

This sequence belongs to the aldolase class II family. Adducin subfamily. As to quaternary structure, heterodimer of an alpha and a gamma subunit. Post-translationally, sumoylated. Proteolytically cleaved by asparagine endopeptidase (AEP) into 2 fragments. Overexpression of the 1-357 fragment induces neuronal apoptosis, and overexpression of either 1-357 or 358-706 fragment increases the degeneration of dendritic spines. Overexpression of the 1-357 fragment impairs neurite outgrowth by downregulating the expression of Rac2, and induces synaptic dysfunction and cognitive impairments in tau P301S transgenic mice, a mouse model for Alzheimer disease (AD). In terms of tissue distribution, cleavage fragment 1-357 is expressed in the brain and the expression increases with age (at protein level). The fragment is expressed in the cortex, hippocampal CA1 region and hippocampal dentate gyrus in tau P301S transgenic mice, a mouse model for Alzheimer disease (AD) (at protein level). The fragment is only weakly expressed in non-transgenic mouse brain sections (at protein level).

Its subcellular location is the cytoplasm. It is found in the cytoskeleton. The protein localises to the cell membrane. Membrane-cytoskeleton-associated protein that promotes the assembly of the spectrin-actin network. Plays a role in actin filament capping. Binds to calmodulin. Involved in myogenic reactivity of the renal afferent arteriole (Af-art), renal interlobular arteries and middle cerebral artery (MCA) to increased perfusion pressure. Involved in regulation of potassium channels in the vascular smooth muscle cells (VSMCs) of the Af-art and MCA ex vivo. Involved in regulation of glomerular capillary pressure, glomerular filtration rate (GFR) and glomerular nephrin expression in response to hypertension. Involved in renal blood flow (RBF) autoregulation. Plays a role in podocyte structure and function. Regulates globular monomer actin (G-actin) and filamentous polymer actin (F-actin) ratios in the primary podocytes affecting actin cytoskeleton organization. Regulates expression of synaptopodin, RhoA, Rac1 and CDC42 in the renal cortex and the primary podocytes. Regulates expression of nephrin in the glomeruli and in the primary podocytes, expression of nephrin and podocinin in the renal cortex, and expression of focal adhesion proteins integrin alpha-3 and integrin beta-1 in the glomeruli. Involved in cell migration and cell adhesion of podocytes, and in podocyte foot process effacement. Regulates expression of profibrotics markers MMP2, MMP9, TGF beta-1, tubular tight junction protein E-cadherin, and mesenchymal markers vimentin and alpha-SMA. Promotes the growth of neurites. In Mus musculus (Mouse), this protein is Gamma-adducin (Add3).